The sequence spans 433 residues: Indole diterpene prenyltransferase terF (433 aa).

It belongs to the tryptophan dimethylallyltransferase family.

It participates in secondary metabolite biosynthesis. In terms of biological role, indole diterpene prenyltransferase; part of the gene cluster that mediates the biosynthesis of terpendoles, indole-diterpene (IDT) mycotoxins including terpendole I, terpendole K, terpendole C, as well as the kinesin Eg5 inhibitor terpendole E. Terpendoles biosynthesis begins with the synthesis of geranylgeranyl diphosphate (GGPP) by a yet unidentified GGPP synthase. Condensation of indole-3-glycerol phosphate with GGPP by the prenyltransferase terC then forms 3-geranylgeranylindole (3-GGI), followed by epoxidation and cyclization of this intermediate (by the FAD-dependent monooxygeanse terM and the terpene cyclase terB) to form paspaline. The cytochrome monooxygenase terQ then hydroxylates paspalline at C-11 to yield terpendole E. The cytochrome monooxygenase terP converts terpendole E to 13-desoxyterpendole I, and terQ converts 13-desoxyterpendole I into terpendole I. TerF and terK are required for conversion of terpendole I to terpendole C which is further converted to terpendole K. This is Indole diterpene prenyltransferase terF from Tolypocladium album (Soil fungus).